The primary structure comprises 400 residues: Glutamyl-tRNA reductase (400 aa).

Residues 45–48, S103, 108–110, and Q114 contribute to the substrate site; these read TCNR and EDQ. C46 serves as the catalytic Nucleophile. Position 179-184 (179-184) interacts with NADP(+); that stretch reads GYGEIG.

It belongs to the glutamyl-tRNA reductase family. Homodimer.

The catalysed reaction is (S)-4-amino-5-oxopentanoate + tRNA(Glu) + NADP(+) = L-glutamyl-tRNA(Glu) + NADPH + H(+). It participates in porphyrin-containing compound metabolism; protoporphyrin-IX biosynthesis; 5-aminolevulinate from L-glutamyl-tRNA(Glu): step 1/2. Catalyzes the NADPH-dependent reduction of glutamyl-tRNA(Glu) to glutamate 1-semialdehyde (GSA). The protein is Glutamyl-tRNA reductase of Clostridium perfringens (strain 13 / Type A).